We begin with the raw amino-acid sequence, 350 residues long: 4-hydroxy-2-oxovalerate aldolase 2 (350 aa).

The Pyruvate carboxyltransferase domain occupies I8–Q260. R16–D17 lines the substrate pocket. D17 provides a ligand contact to Mn(2+). The Proton acceptor role is filled by H20. Positions 170 and 199 each coordinate substrate. Positions 199 and 201 each coordinate Mn(2+). Y290 contributes to the substrate binding site.

Belongs to the 4-hydroxy-2-oxovalerate aldolase family.

It carries out the reaction (S)-4-hydroxy-2-oxopentanoate = acetaldehyde + pyruvate. This is 4-hydroxy-2-oxovalerate aldolase 2 (tesG) from Comamonas testosteroni (Pseudomonas testosteroni).